The primary structure comprises 164 residues: MDLKQIEKLMIAMGRNKMKRIVIKREGLELELERDTVPSIQEPVFYDNRLFAGFSQERPIPTDQNLGNPIVKESIEKKESEAPAQGDFIVSPLVGTFYGSPSPEAPAFIKPGDTVSEDTVVCIVEAMKVMNEVKAGMSGRVEEILITNGDPVQFGSKLFRIVKA.

Positions G86 to V162 constitute a Biotinyl-binding domain. At K128 the chain carries N6-biotinyllysine.

In terms of assembly, homodimer.

Its pathway is lipid metabolism; fatty acid biosynthesis. This protein is a component of the acetyl coenzyme A carboxylase complex; first, biotin carboxylase catalyzes the carboxylation of the carrier protein and then the transcarboxylase transfers the carboxyl group to form malonyl-CoA. This chain is Biotin carboxyl carrier protein of acetyl-CoA carboxylase (accB), found in Chlamydia trachomatis serovar D (strain ATCC VR-885 / DSM 19411 / UW-3/Cx).